Here is a 342-residue protein sequence, read N- to C-terminus: Transmembrane protein 268 (342 aa).

2 consecutive transmembrane segments (helical) span residues 106–126 and 133–153; these read AFAV…SQMF and AGVL…VLVF. Residues 245-267 form a disordered region; it reads VEGPEDLEDAPLLPSTPGPQERP.

In terms of assembly, interacts with ITGAM; this interaction inhibits ITGAM degradation via the endosome-lysosome pathway. Interacts with ITGB4; this interaction prevents ITGB4 degradation.

The protein localises to the cell membrane. In terms of biological role, stabilizes cell surface expression of ITGAM and participates in the adhesion and migration of phagocytes during bacterial clearance. The sequence is that of Transmembrane protein 268 from Mus musculus (Mouse).